Reading from the N-terminus, the 142-residue chain is Sec-independent protein translocase protein TatB (142 aa).

The helical transmembrane segment at 2-22 (FANVGWGEMLVLVIAGLVILG) threads the bilayer. The tract at residues 89 to 142 (DDSIFTGKFDQNGKSEKPEQKPEKPQSAPGPAAAVPDQPAGGRSGSTPYDTDAT) is disordered. The span at 99-112 (QNGKSEKPEQKPEK) shows a compositional bias: basic and acidic residues. A compositionally biased stretch (polar residues) spans 133–142 (GSTPYDTDAT).

The protein belongs to the TatB family. As to quaternary structure, the Tat system comprises two distinct complexes: a TatABC complex, containing multiple copies of TatA, TatB and TatC subunits, and a separate TatA complex, containing only TatA subunits. Substrates initially bind to the TatABC complex, which probably triggers association of the separate TatA complex to form the active translocon.

The protein localises to the cell membrane. Its function is as follows. Part of the twin-arginine translocation (Tat) system that transports large folded proteins containing a characteristic twin-arginine motif in their signal peptide across membranes. Together with TatC, TatB is part of a receptor directly interacting with Tat signal peptides. TatB may form an oligomeric binding site that transiently accommodates folded Tat precursor proteins before their translocation. The protein is Sec-independent protein translocase protein TatB of Mycolicibacterium vanbaalenii (strain DSM 7251 / JCM 13017 / BCRC 16820 / KCTC 9966 / NRRL B-24157 / PYR-1) (Mycobacterium vanbaalenii).